The primary structure comprises 166 residues: Zinc finger CCHC domain-containing protein 13 (166 aa).

Residues 4–21 (KDFFACGHSGHWARGCPR) form a CCHC-type 1; degenerate zinc finger. The segment at 45–62 (YTCYCCGESGRNAKNCVL) adopts a CCHC-type 2; degenerate zinc-finger fold. 4 consecutive CCHC-type zinc fingers follow at residues 65-82 (NICY…DCKD), 89-106 (QHCY…DCDR), 110-127 (QKCY…DCAQ), and 128-145 (VKCY…NCSK).

The protein is Zinc finger CCHC domain-containing protein 13 (ZCCHC13) of Homo sapiens (Human).